The chain runs to 104 residues: Secretoglobin family 3A member 1 (104 aa).

The N-terminal stretch at 1–20 is a signal peptide; it reads MKLAALLGLCVALSCSSAAA.

Belongs to the secretoglobin family. UGRP subfamily. In terms of assembly, homodimer; disulfide-linked. As to expression, highly expressed in lung and prostate. Also found in mammary gland, spleen, pancreas, testis and liver. Detected throughout the airway epithelium in lung, with highest expression in large airways. Found in lung submucosal glands where it localizes to acinar and ductile cells. Not detected in respiratory bronchioles, alveolar ducts or alveolar epithelium. In mammary gland, specifically localizes to luminal epithelial cells.

Its subcellular location is the secreted. Secreted cytokine-like protein. Inhibits cell growth in vitro. This chain is Secretoglobin family 3A member 1 (SCGB3A1), found in Homo sapiens (Human).